Reading from the N-terminus, the 195-residue chain is Acireductone dioxygenase 2 (195 aa).

Fe(2+) contacts are provided by His94, His96, Glu100, and His139. Residues His94, His96, Glu100, and His139 each contribute to the Ni(2+) site.

This sequence belongs to the acireductone dioxygenase (ARD) family. Fe(2+) is required as a cofactor. Requires Ni(2+) as cofactor.

The protein resides in the cytoplasm. The protein localises to the nucleus. The catalysed reaction is 1,2-dihydroxy-5-(methylsulfanyl)pent-1-en-3-one + O2 = 4-methylsulfanyl-2-oxobutanoate + formate + 2 H(+). It catalyses the reaction 1,2-dihydroxy-5-(methylsulfanyl)pent-1-en-3-one + O2 = 3-(methylsulfanyl)propanoate + CO + formate + 2 H(+). It participates in amino-acid biosynthesis; L-methionine biosynthesis via salvage pathway; L-methionine from S-methyl-5-thio-alpha-D-ribose 1-phosphate: step 5/6. Functionally, catalyzes 2 different reactions between oxygen and the acireductone 1,2-dihydroxy-3-keto-5-methylthiopentene (DHK-MTPene) depending upon the metal bound in the active site. Fe-containing acireductone dioxygenase (Fe-ARD) produces formate and 2-keto-4-methylthiobutyrate (KMTB), the alpha-ketoacid precursor of methionine in the methionine recycle pathway. Ni-containing acireductone dioxygenase (Ni-ARD) produces methylthiopropionate, carbon monoxide and formate, and does not lie on the methionine recycle pathway. The polypeptide is Acireductone dioxygenase 2 (Physcomitrium patens (Spreading-leaved earth moss)).